Reading from the N-terminus, the 891-residue chain is Alanine--tRNA ligase (891 aa).

Zn(2+)-binding residues include His564, His568, Cys681, and His685.

Belongs to the class-II aminoacyl-tRNA synthetase family. Zn(2+) is required as a cofactor.

The protein localises to the cytoplasm. It catalyses the reaction tRNA(Ala) + L-alanine + ATP = L-alanyl-tRNA(Ala) + AMP + diphosphate. In terms of biological role, catalyzes the attachment of alanine to tRNA(Ala) in a two-step reaction: alanine is first activated by ATP to form Ala-AMP and then transferred to the acceptor end of tRNA(Ala). Also edits incorrectly charged Ser-tRNA(Ala) and Gly-tRNA(Ala) via its editing domain. The chain is Alanine--tRNA ligase from Methylorubrum extorquens (strain PA1) (Methylobacterium extorquens).